Consider the following 277-residue polypeptide: Large ribosomal subunit protein uL15c (277 aa).

A chloroplast-targeting transit peptide spans 1-67 (MATPLSISSN…FARPLVVVSQ (67 aa)). An N-acetylthreonine modification is found at T68. Residues 81 to 125 (FRLDNLGPQPGSRKKQKRKGRGISAGQGASCGFGMRGQKSRSGPG) are disordered. Positions 92–101 (SRKKQKRKGR) are enriched in basic residues. Positions 103–115 (ISAGQGASCGFGM) are enriched in gly residues.

It belongs to the universal ribosomal protein uL15 family. As to quaternary structure, part of the 50S ribosomal subunit.

The protein resides in the plastid. The protein localises to the chloroplast. This chain is Large ribosomal subunit protein uL15c (RPL15), found in Arabidopsis thaliana (Mouse-ear cress).